The primary structure comprises 588 residues: DELLA protein GAI (588 aa).

The segment covering 1-15 (MKRDRDRDREREKRA) has biased composition (basic and acidic residues). Residues 1 to 38 (MKRDRDRDREREKRAFSNGAVSSGKSKIWEEDEEEKPD) are disordered. Positions 42–46 (DELLA) match the DELLA motif motif. Positions 152–177 (GAVFNSDSNKRHRSTTSSFSTTSSSM) are disordered. The segment covering 166 to 177 (TTSSFSTTSSSM) has biased composition (low complexity). The region spanning 190–574 (VDSQETGVRL…RPLIATSAWK (385 aa)) is the GRAS domain. Residues 197-251 (VRLVHTLMACAEAVQQENLTLADQLVRHIGILAVSQSGAMRKVATYFAEALARRI) form a leucine repeat I (LRI) region. The segment at 269 to 334 (QMHFYETCPY…GGPPAFRLTG (66 aa)) is VHIID. Residues 300-304 (VHVID) carry the VHIID motif. Residues 348–380 (QVGWKLAQLAETIGVEFEFRGFVANSLADLDAT) are leucine repeat II (LRII). Residues 392–495 (VAINSVFELH…EVYLGRQICN (104 aa)) form a PFYRE region. Positions 400 to 404 (LHRLL) match the LXXLL motif motif. Residues 498 to 574 (ACEGSDRVER…RPLIATSAWK (77 aa)) are SAW.

It belongs to the GRAS family. DELLA subfamily. Post-translationally, phosphorylated. In terms of processing, ubiquitinated. Upon GA application it is ubiquitinated, leading to its subsequent degradation. In terms of tissue distribution, expressed in both vegetative and reproductive tissues.

Its subcellular location is the nucleus. Functionally, probable transcriptional regulator that acts as a repressor of the gibberellin (GA) signaling pathway. Probably acts by participating in large multiprotein complexes that repress transcription of GA-inducible genes. Upon GA application, it is degraded by the proteasome, allowing the GA signaling pathway. Its degradation is not essential for germination. This is DELLA protein GAI (GAI) from Solanum lycopersicum (Tomato).